A 406-amino-acid chain; its full sequence is Exodeoxyribonuclease 7 large subunit (406 aa).

Belongs to the XseA family. In terms of assembly, heterooligomer composed of large and small subunits.

Its subcellular location is the cytoplasm. It carries out the reaction Exonucleolytic cleavage in either 5'- to 3'- or 3'- to 5'-direction to yield nucleoside 5'-phosphates.. Bidirectionally degrades single-stranded DNA into large acid-insoluble oligonucleotides, which are then degraded further into small acid-soluble oligonucleotides. The protein is Exodeoxyribonuclease 7 large subunit of Thermobifida fusca (strain YX).